Consider the following 214-residue polypeptide: Probable transaldolase (214 aa).

K83 acts as the Schiff-base intermediate with substrate in catalysis.

It belongs to the transaldolase family. Type 3B subfamily.

It localises to the cytoplasm. The enzyme catalyses D-sedoheptulose 7-phosphate + D-glyceraldehyde 3-phosphate = D-erythrose 4-phosphate + beta-D-fructose 6-phosphate. Its pathway is carbohydrate degradation; pentose phosphate pathway; D-glyceraldehyde 3-phosphate and beta-D-fructose 6-phosphate from D-ribose 5-phosphate and D-xylulose 5-phosphate (non-oxidative stage): step 2/3. Its function is as follows. Transaldolase is important for the balance of metabolites in the pentose-phosphate pathway. The protein is Probable transaldolase of Geotalea daltonii (strain DSM 22248 / JCM 15807 / FRC-32) (Geobacter daltonii).